Consider the following 297-residue polypeptide: MRIVLITGISGSGKSVALNALEDAGYYCVDNLPPHVLPELARYLAHEGQNRLAVAIDARSSASLDEMPGLIRALSREHDVRVLFLNASTQALIQRFSETRRRHPLSGSPSHDADVGLLVSLEEAIERERELVAPLAEFGHQIDTSNLRANVLRTWVKRFIEQKNDDLVLMFESFGFKRGVPLDADFMFDVRALPNPYYDHELRPLTGLDQPVVAFLDALPVVHQMLDDIETFLVKWLPHFREDNRSYLTVAIGCTGGQHRSVFLAETLAARLSRQASVIVRHRDAPVAVDASSRLVT.

8–15 (GISGSGKS) provides a ligand contact to ATP. 57–60 (DARS) lines the GTP pocket.

It belongs to the RapZ-like family.

Functionally, displays ATPase and GTPase activities. This Burkholderia pseudomallei (strain 668) protein is Nucleotide-binding protein BURPS668_0577.